The sequence spans 263 residues: Taurine import ATP-binding protein TauB (263 aa).

In terms of domain architecture, ABC transporter spans 4–235 (LTAEAISLSF…RYAAGETVRS (232 aa)). 40 to 47 (GPSGCGKS) is a binding site for ATP.

Belongs to the ABC transporter superfamily. Taurine importer (TC 3.A.1.17.1) family. As to quaternary structure, the complex is composed of two ATP-binding proteins (TauB), two transmembrane proteins (TauC) and a solute-binding protein (TauA).

It is found in the cell inner membrane. It catalyses the reaction taurine(out) + ATP + H2O = taurine(in) + ADP + phosphate + H(+). Functionally, part of the ABC transporter complex TauABC involved in taurine import. Responsible for energy coupling to the transport system. This chain is Taurine import ATP-binding protein TauB, found in Pseudomonas aeruginosa (strain ATCC 15692 / DSM 22644 / CIP 104116 / JCM 14847 / LMG 12228 / 1C / PRS 101 / PAO1).